The sequence spans 273 residues: Putative cysteine-rich repeat secretory protein 40 (273 aa).

Residues 1–32 form the signal peptide; sequence MYPSCSLLQRLVWFPFLALVATQLLFIRNVSS. Gnk2-homologous domains follow at residues 39–141 and 151–264; these read YLHH…SISV and YENN…LYPF.

It belongs to the cysteine-rich repeat secretory protein family.

Its subcellular location is the secreted. The chain is Putative cysteine-rich repeat secretory protein 40 (CRRSP40) from Arabidopsis thaliana (Mouse-ear cress).